The following is a 196-amino-acid chain: Large ribosomal subunit protein uL10 (196 aa).

The segment at 167–196 (EKKAAEGPAEAPQPATEPPAEAPEAPADAE) is disordered.

It belongs to the universal ribosomal protein uL10 family. Part of the ribosomal stalk of the 50S ribosomal subunit. The N-terminus interacts with L11 and the large rRNA to form the base of the stalk. The C-terminus forms an elongated spine to which L12 dimers bind in a sequential fashion forming a multimeric L10(L12)X complex.

Its function is as follows. Forms part of the ribosomal stalk, playing a central role in the interaction of the ribosome with GTP-bound translation factors. The chain is Large ribosomal subunit protein uL10 from Mycolicibacterium paratuberculosis (strain ATCC BAA-968 / K-10) (Mycobacterium paratuberculosis).